Reading from the N-terminus, the 377-residue chain is Nitric oxide reductase FlRd-NAD(+) reductase (377 aa).

It belongs to the FAD-dependent oxidoreductase family. FAD serves as cofactor.

It is found in the cytoplasm. It carries out the reaction 2 reduced [nitric oxide reductase rubredoxin domain] + NAD(+) + H(+) = 2 oxidized [nitric oxide reductase rubredoxin domain] + NADH. It participates in nitrogen metabolism; nitric oxide reduction. One of at least two accessory proteins for anaerobic nitric oxide (NO) reductase. Reduces the rubredoxin moiety of NO reductase. This Escherichia coli (strain SE11) protein is Nitric oxide reductase FlRd-NAD(+) reductase.